The chain runs to 194 residues: ATP-dependent Clp protease proteolytic subunit (194 aa).

Residue S98 is the Nucleophile of the active site. H123 is a catalytic residue.

It belongs to the peptidase S14 family. As to quaternary structure, fourteen ClpP subunits assemble into 2 heptameric rings which stack back to back to give a disk-like structure with a central cavity, resembling the structure of eukaryotic proteasomes.

The protein resides in the cytoplasm. It carries out the reaction Hydrolysis of proteins to small peptides in the presence of ATP and magnesium. alpha-casein is the usual test substrate. In the absence of ATP, only oligopeptides shorter than five residues are hydrolyzed (such as succinyl-Leu-Tyr-|-NHMec, and Leu-Tyr-Leu-|-Tyr-Trp, in which cleavage of the -Tyr-|-Leu- and -Tyr-|-Trp bonds also occurs).. In terms of biological role, cleaves peptides in various proteins in a process that requires ATP hydrolysis. Has a chymotrypsin-like activity. Plays a major role in the degradation of misfolded proteins. This Syntrophotalea carbinolica (strain DSM 2380 / NBRC 103641 / GraBd1) (Pelobacter carbinolicus) protein is ATP-dependent Clp protease proteolytic subunit.